The following is a 448-amino-acid chain: Probable glycine dehydrogenase (decarboxylating) subunit 1 (448 aa).

It belongs to the GcvP family. N-terminal subunit subfamily. As to quaternary structure, the glycine cleavage system is composed of four proteins: P, T, L and H. In this organism, the P 'protein' is a heterodimer of two subunits.

The catalysed reaction is N(6)-[(R)-lipoyl]-L-lysyl-[glycine-cleavage complex H protein] + glycine + H(+) = N(6)-[(R)-S(8)-aminomethyldihydrolipoyl]-L-lysyl-[glycine-cleavage complex H protein] + CO2. Functionally, the glycine cleavage system catalyzes the degradation of glycine. The P protein binds the alpha-amino group of glycine through its pyridoxal phosphate cofactor; CO(2) is released and the remaining methylamine moiety is then transferred to the lipoamide cofactor of the H protein. This Parvibaculum lavamentivorans (strain DS-1 / DSM 13023 / NCIMB 13966) protein is Probable glycine dehydrogenase (decarboxylating) subunit 1.